The primary structure comprises 652 residues: UvrABC system protein C (652 aa).

Positions 19-96 (KTSGVYLWKD…IKKHKPRYNI (78 aa)) constitute a GIY-YIG domain. Residues 203-238 (EDVSGTLKEKMKEAAEKKEFEKAARLRDGIQAVYAL) form the UVR domain.

This sequence belongs to the UvrC family. In terms of assembly, interacts with UvrB in an incision complex.

It localises to the cytoplasm. Its function is as follows. The UvrABC repair system catalyzes the recognition and processing of DNA lesions. UvrC both incises the 5' and 3' sides of the lesion. The N-terminal half is responsible for the 3' incision and the C-terminal half is responsible for the 5' incision. This chain is UvrABC system protein C, found in Treponema denticola (strain ATCC 35405 / DSM 14222 / CIP 103919 / JCM 8153 / KCTC 15104).